The chain runs to 162 residues: Cytochrome c-type biogenesis protein CcmE (162 aa).

At 1 to 8 (MNPRRKKR) the chain is on the cytoplasmic side. Residues 9–29 (LALVVGLIGGVAAVASLLLYA) traverse the membrane as a helical; Signal-anchor for type II membrane protein segment. Over 30–162 (LNTNLNLFYT…YTETQKGGSR (133 aa)) the chain is Periplasmic. Heme is bound by residues His-131 and Tyr-135.

It belongs to the CcmE/CycJ family.

The protein localises to the cell inner membrane. Its function is as follows. Heme chaperone required for the biogenesis of c-type cytochromes. Transiently binds heme delivered by CcmC and transfers the heme to apo-cytochromes in a process facilitated by CcmF and CcmH. This is Cytochrome c-type biogenesis protein CcmE from Shewanella amazonensis (strain ATCC BAA-1098 / SB2B).